A 237-amino-acid chain; its full sequence is uncharacterized protein (237 aa).

A helical membrane pass occupies residues 53 to 70 (LIFLATVLAGLILFYFGV). A disordered region spans residues 85–155 (PPIVIKPVAP…TQEKKDVKVA (71 aa)). Residues 98–157 (KTQESNQTTKKEVKQEEQKKEEPKKMVQKQETQEKREVKKSEKNEVKQTQEKKDVKVAKK) adopt a coiled-coil conformation. 2 stretches are compositionally biased toward basic and acidic residues: residues 106–122 (TKKEVKQEEQKKEEPKK) and 128–155 (ETQEKREVKKSEKNEVKQTQEKKDVKVA). An SPOR domain is found at 165 to 237 (AANLRTYKFQ…HFKDAIFVRK (73 aa)).

It is found in the membrane. This is an uncharacterized protein from Aquifex aeolicus (strain VF5).